Consider the following 117-residue polypeptide: Large ribosomal subunit protein bL17 (117 aa).

This sequence belongs to the bacterial ribosomal protein bL17 family. In terms of assembly, part of the 50S ribosomal subunit. Contacts protein L32.

This is Large ribosomal subunit protein bL17 from Endomicrobium trichonymphae.